A 252-amino-acid polypeptide reads, in one-letter code: Uridylate kinase (252 aa).

Lys27–Gly30 contributes to the ATP binding site. Position 68 (Gly68) interacts with UMP. 2 residues coordinate ATP: Gly69 and Arg73. Residues Asp88 and Met149–Thr156 each bind UMP. Positions 182 and 185 each coordinate ATP.

Belongs to the UMP kinase family. As to quaternary structure, homohexamer.

The protein resides in the cytoplasm. It carries out the reaction UMP + ATP = UDP + ADP. The protein operates within pyrimidine metabolism; CTP biosynthesis via de novo pathway; UDP from UMP (UMPK route): step 1/1. Its activity is regulated as follows. Inhibited by UTP. Its function is as follows. Catalyzes the reversible phosphorylation of UMP to UDP. This chain is Uridylate kinase, found in Mycobacterium sp. (strain JLS).